Reading from the N-terminus, the 151-residue chain is Transcriptional repressor NrdR (151 aa).

The segment at 3 to 34 is a zinc-finger region; it reads CPFCSHPDTQVVETREAEDGGFIRRRRQCGGC. Residues 49 to 139 enclose the ATP-cone domain; it reads PAIVKKDGRR…VYRSFEDVDD (91 aa).

Belongs to the NrdR family. The cofactor is Zn(2+).

Negatively regulates transcription of bacterial ribonucleotide reductase nrd genes and operons by binding to NrdR-boxes. This chain is Transcriptional repressor NrdR, found in Delftia acidovorans (strain DSM 14801 / SPH-1).